The primary structure comprises 377 residues: MDKYKNLTRSLTREFINLNPIQRGGILPKEAKKAVYEYWDGYSVCDYCHGRLDEVTCPPIKDFLEDIAKFLNMDCARPTHGAREGKFIVMHAICKEGDYVVLDKNAHYTSYVAAERAKLNVAEVGYEEEYPTYKINLEGYKEVIDNLEDKGKNVGLILLTHVDGEYGNLNDAKKVGKIAKEKGIPFLLNCAYTVGRMPVNGKEVKADFIVASGHKSMAASAPCGILAFSEEFSDKITKTSEKFPVKEIEMLGCTSRGLPIVTLMASFPHVVERVKKWDEELKKTRYVVDELEKIGFKQLGIKPKEHDLIKFETPVLDEIAKKDKRRGFFFYDELKKRGIGGIRAGVTKEIKMSVYGLEWEQVEYVVNAIKEIVESCK.

Pyridoxal 5'-phosphate contacts are provided by residues Ala-82–Arg-83, Asn-189, and Ser-212–His-214. Position 215 is an N6-(pyridoxal phosphate)lysine (Lys-215).

This sequence belongs to the SepCysS family. In terms of assembly, homodimer. Interacts with SepRS. The cofactor is pyridoxal 5'-phosphate.

The catalysed reaction is O-phospho-L-seryl-tRNA(Cys) + hydrogen sulfide + H(+) = L-cysteinyl-tRNA(Cys) + phosphate. Functionally, converts O-phospho-L-seryl-tRNA(Cys) (Sep-tRNA(Cys)) to L-cysteinyl-tRNA(Cys) (Cys-tRNA(Cys)). In Methanocaldococcus jannaschii (strain ATCC 43067 / DSM 2661 / JAL-1 / JCM 10045 / NBRC 100440) (Methanococcus jannaschii), this protein is O-phospho-L-seryl-tRNA:Cys-tRNA synthase.